The chain runs to 419 residues: UDP-N-acetylglucosamine 1-carboxyvinyltransferase (419 aa).

22 to 23 (KN) contributes to the phosphoenolpyruvate binding site. Position 95 (Arg95) interacts with UDP-N-acetyl-alpha-D-glucosamine. The Proton donor role is filled by Cys119. Cys119 bears the 2-(S-cysteinyl)pyruvic acid O-phosphothioketal mark. Residues 164–167 (KVSV), Asp308, and Ile330 each bind UDP-N-acetyl-alpha-D-glucosamine.

This sequence belongs to the EPSP synthase family. MurA subfamily.

The protein resides in the cytoplasm. The enzyme catalyses phosphoenolpyruvate + UDP-N-acetyl-alpha-D-glucosamine = UDP-N-acetyl-3-O-(1-carboxyvinyl)-alpha-D-glucosamine + phosphate. Its pathway is cell wall biogenesis; peptidoglycan biosynthesis. In terms of biological role, cell wall formation. Adds enolpyruvyl to UDP-N-acetylglucosamine. The chain is UDP-N-acetylglucosamine 1-carboxyvinyltransferase from Rickettsia africae (strain ESF-5).